Reading from the N-terminus, the 1408-residue chain is ABC multidrug transporter MDR1 (1408 aa).

Positions I79–N88 are enriched in polar residues. The interval I79–S102 is disordered. 2 consecutive transmembrane segments (helical) span residues F147–G167 and L223–W243. In terms of domain architecture, ABC transmembrane type-1 1 spans V157–K464. Residue N244 is glycosylated (N-linked (GlcNAc...) asparagine). A run of 4 helical transmembrane segments spans residues K296–V316, L321–T341, I408–V428, and G436–A456. Residues I499 to N744 form the ABC transporter 1 domain. G534–S541 contributes to the ATP binding site. N-linked (GlcNAc...) asparagine glycosylation is present at N606. 2 consecutive transmembrane segments (helical) span residues I838–F858 and L882–F902. Residues I838–K1125 form the ABC transmembrane type-1 2 domain. N934 is a glycosylation site (N-linked (GlcNAc...) asparagine). The next 4 membrane-spanning stretches (helical) occupy residues G952–C972, L981–I999, G1072–A1092, and F1099–F1119. N-linked (GlcNAc...) asparagine glycosylation is found at N1127 and N1182. An ABC transporter 2 domain is found at V1162 to M1402. An ATP-binding site is contributed by G1197–S1204. N-linked (GlcNAc...) asparagine glycosylation is present at N1404.

It belongs to the ABC transporter superfamily. ABCB family. Multidrug resistance exporter (TC 3.A.1.201) subfamily.

It is found in the cell membrane. It catalyses the reaction itraconazole(in) + ATP + H2O = itraconazole(out) + ADP + phosphate + H(+). It carries out the reaction voriconazole(in) + ATP + H2O = voriconazole(out) + ADP + phosphate + H(+). The enzyme catalyses fluconazole(in) + ATP + H2O = fluconazole(out) + ADP + phosphate + H(+). Its function is as follows. Pleiotropic ABC efflux transporter that confers resistance to structurally and functionally unrelated compounds including azoles such as fluconazole (FLC), itraconazole (ITC), posaconazole (POS), and voriconazole (VRC). The polypeptide is ABC multidrug transporter MDR1 (Cryptococcus neoformans var. grubii serotype A (strain H99 / ATCC 208821 / CBS 10515 / FGSC 9487) (Filobasidiella neoformans var. grubii)).